We begin with the raw amino-acid sequence, 164 residues long: Coenzyme Q-binding protein coq10, mitochondrial (164 aa).

The protein belongs to the COQ10 family. Interacts with coenzyme Q.

It localises to the mitochondrion inner membrane. Functionally, required for the function of coenzyme Q in the respiratory chain. May serve as a chaperone or may be involved in the transport of Q6 from its site of synthesis to the catalytic sites of the respiratory complexes. The protein is Coenzyme Q-binding protein coq10, mitochondrial of Schizosaccharomyces pombe (strain 972 / ATCC 24843) (Fission yeast).